A 499-amino-acid polypeptide reads, in one-letter code: Glucooligosaccharide oxidase (499 aa).

The first 25 residues, 1–25, serve as a signal peptide directing secretion; sequence MVRIQELTAALSLASVVQASWIQKR. Cys31 and Cys80 are oxidised to a cystine. One can recognise an FAD-binding PCMH-type domain in the interval 58 to 230; that stretch reads VDYDPAAIAI…SEFEFNTFEA (173 aa). A cross-link (6-(S-cysteinyl)-8alpha-(pros-histidyl)-FAD (His-Cys)) is located at residues 95 to 155; the sequence is HSYGSYGFGG…GNRALSHGTC (61 aa). The substrate site is built by Tyr97, Thr154, and Arg270. 2 N-linked (GlcNAc...) asparagine glycosylation sites follow: Asn330 and Asn366. 2 residues coordinate substrate: Gln378 and Gln409. Asn419 carries N-linked (GlcNAc...) asparagine glycosylation. Tyr454 is a binding site for substrate. Residue Tyr454 is the Proton acceptor of the active site.

This sequence belongs to the oxygen-dependent FAD-linked oxidoreductase family. It depends on FAD as a cofactor. The FAD cofactor is bound via a bicovalent 6-S-cysteinyl, 8alpha-N1-histidyl FAD linkage.

It localises to the secreted. It carries out the reaction beta-lactose + O2 = lactobiono-1,5-lactone + H2O2. The enzyme catalyses D-cellobiose + O2 = D-cellobiono-1,5-lactone + H2O2. The catalysed reaction is D-cellotriose + O2 = D-cellotriono-1,5-lactone + H2O2. It catalyses the reaction D-cellotetraose + O2 = D-cellotetraono-1,5-lactone + H2O2. It carries out the reaction D-cellopentaose + O2 = D-cellopentaono-1,5-lactone + H2O2. The enzyme catalyses D-cellohexaose + O2 = D-cellohexaono-1,5-lactone + H2O2. Functionally, catalyzes the selective oxidation of C1 hydroxyl moieties on mono- and disaccharides with concomitant reduction of molecular oxygen to hydrogen peroxide. This results in the formation of the corresponding lactones, which typically undergo spontaneous hydrolysis. Glucooligosaccharide oxidase is able to oxidize the monosaccharide D-glucose as well as the disaccharides maltose, cellobiose, and lactose. In addition, it shows high selectivity for cello- and maltooligosaccharides, indicating that glucooligosaccharide oxidase prefers oligosaccharides with a beta-D-glucosyl unit on the reducing end and additional sugar units linked by alpha- or beta-1,4 glucosidic bonds. The sequence is that of Glucooligosaccharide oxidase (gluO) from Sarocladium strictum (Black bundle disease fungus).